Consider the following 89-residue polypeptide: DNA/RNA-binding protein Alba (89 aa).

Lys11 carries the N6-acetyllysine modification.

Belongs to the histone-like Alba family. In terms of processing, acetylated. Acetylation at Lys-11 decreases DNA-binding affinity.

The protein localises to the cytoplasm. The protein resides in the chromosome. Its function is as follows. Binds double-stranded DNA tightly but without sequence specificity. Involved in DNA compaction. The chain is DNA/RNA-binding protein Alba from Thermoplasma volcanium (strain ATCC 51530 / DSM 4299 / JCM 9571 / NBRC 15438 / GSS1).